We begin with the raw amino-acid sequence, 398 residues long: Aspartic protease 3 (398 aa).

Positions 1-17 are cleaved as a signal peptide; sequence MSGRVFLLLALVALASA. The propeptide at 18 to 55 is removed in mature form; it reads IQRIKLEKRTYTREQYKFGSIQEHLKAKYVPGYIPNKD. Positions 69–392 constitute a Peptidase A1 domain; sequence YYGPVTIGTP…DHGNKRVGFA (324 aa). Asp-87 is a catalytic residue. Cysteines 100 and 107 form a disulfide. The active site involves Asp-279. Cys-313 and Cys-351 are joined by a disulfide. Residue Asn-321 is glycosylated (N-linked (GlcNAc...) asparagine).

This sequence belongs to the peptidase A1 family. As to expression, highly expressed in intestine and to a lower extent in body wall muscles, hypodermis and neurons.

Its subcellular location is the cytoplasm. The protein localises to the lysosome. It localises to the secreted. Functionally, aspartic protease. Part of the necrosis cell death pathway. Involved in neuronal cell degeneration. Involved in heat stress response. The chain is Aspartic protease 3 from Caenorhabditis elegans.